The sequence spans 114 residues: Nucleoid-associated protein THEYE_A1069 (114 aa).

It belongs to the YbaB/EbfC family. In terms of assembly, homodimer.

The protein resides in the cytoplasm. It is found in the nucleoid. Its function is as follows. Binds to DNA and alters its conformation. May be involved in regulation of gene expression, nucleoid organization and DNA protection. The chain is Nucleoid-associated protein THEYE_A1069 from Thermodesulfovibrio yellowstonii (strain ATCC 51303 / DSM 11347 / YP87).